Consider the following 760-residue polypeptide: Prolyl endopeptidase (760 aa).

Catalysis depends on charge relay system residues S609, D693, and H730.

Belongs to the peptidase S9A family.

The protein localises to the cytoplasm. It catalyses the reaction Hydrolysis of Pro-|-Xaa &gt;&gt; Ala-|-Xaa in oligopeptides.. Inhibited by chymostatin, Boc-Glu(NHO-Bz)-Pyrrolidide, Z-Pro-L-prolinal dimethyacetal and the peptide H-H-L-P-P-P-V-OH. Cleaves peptide bonds on the C-terminal side of prolyl residues within peptides that are up to approximately 30 amino acids long. The protein is Prolyl endopeptidase (prep) of Dictyostelium discoideum (Social amoeba).